Here is a 115-residue protein sequence, read N- to C-terminus: MRIYINEIKLKDDGVYCFSEESTEGLEEVGQMLVDSDNYGFAYLLDDGQSYSYLIFVQETWSMLHENRDKKIIINNHLELKHFQEELDYVLNNIEGNNNYGKEFVSAVEKTFELE.

The protein belongs to the UPF0738 family.

The polypeptide is UPF0738 protein SERP0585 (Staphylococcus epidermidis (strain ATCC 35984 / DSM 28319 / BCRC 17069 / CCUG 31568 / BM 3577 / RP62A)).